Consider the following 407-residue polypeptide: Probable peptidoglycan glycosyltransferase FtsW (407 aa).

Over 1-25 (MSIDFRNIIKPYPSPIITGRGIDLD) the chain is Cytoplasmic. A helical transmembrane segment spans residues 26 to 46 (FPMLAGCLALLGLGLVMITSA). The Periplasmic portion of the chain corresponds to 47-65 (SSEVAAVQSGNTLYMMIRH). A helical transmembrane segment spans residues 66-86 (LVYLVIGLGACIVTMMIPIAT). Over 87 to 89 (WQR) the chain is Cytoplasmic. Residues 90 to 110 (LGWLMLIGAFGLLIMVILPGI) traverse the membrane as a helical segment. Residues 111–119 (GREVNGSMR) lie on the Periplasmic side of the membrane. A helical transmembrane segment spans residues 120–140 (WIGFGAFNVQPSEIAKVFVVI). The Cytoplasmic segment spans residues 141 to 155 (YLAGYLVRRQKEVRE). A helical membrane pass occupies residues 156 to 176 (SWMGFFKPFIVLLPMAGLLLM). Residues 177–181 (EPDFG) are Periplasmic-facing. Residues 182–202 (ATVVMMGAAAAMLFLGGVGLF) form a helical membrane-spanning segment. Residue Arg-203 is a topological domain, cytoplasmic. The helical transmembrane segment at 204–224 (FTLMVVLAVAAVTVLVQAQPY) threads the bilayer. Residues 225-283 (RMARLITFTDPWSDQFGSGYQLTQALIAFGRGEWLGVGLGNSVQKQFYLPEAHTDFVFS) are Periplasmic-facing. Residues 284 to 304 (VLAEELGVVGSLCTVALFVFV) form a helical membrane-spanning segment. Over 305–321 (CVRGMYIGMWAEKAKQY) the chain is Cytoplasmic. A helical membrane pass occupies residues 322-342 (FAAYVAYGLSFLWIGQFLINI). The Periplasmic segment spans residues 343–355 (GVNVGLLPTKGLT). The helical transmembrane segment at 356 to 376 (LPFLSYGGSSLVICCACLGLL) threads the bilayer. Residues 377 to 407 (LRIEWESRTHLGSEEMEFSESDFAEEPTHGR) are Cytoplasmic-facing.

The protein belongs to the SEDS family. FtsW subfamily.

It is found in the cell inner membrane. It catalyses the reaction [GlcNAc-(1-&gt;4)-Mur2Ac(oyl-L-Ala-gamma-D-Glu-L-Lys-D-Ala-D-Ala)](n)-di-trans,octa-cis-undecaprenyl diphosphate + beta-D-GlcNAc-(1-&gt;4)-Mur2Ac(oyl-L-Ala-gamma-D-Glu-L-Lys-D-Ala-D-Ala)-di-trans,octa-cis-undecaprenyl diphosphate = [GlcNAc-(1-&gt;4)-Mur2Ac(oyl-L-Ala-gamma-D-Glu-L-Lys-D-Ala-D-Ala)](n+1)-di-trans,octa-cis-undecaprenyl diphosphate + di-trans,octa-cis-undecaprenyl diphosphate + H(+). It participates in cell wall biogenesis; peptidoglycan biosynthesis. In terms of biological role, peptidoglycan polymerase that is essential for cell division. This chain is Probable peptidoglycan glycosyltransferase FtsW, found in Pseudomonas fluorescens (strain SBW25).